A 217-amino-acid chain; its full sequence is Cytochrome b5 domain-containing protein 1 (217 aa).

One can recognise a Cytochrome b5 heme-binding domain in the interval 6–72 (PRYFTPREVS…NPKTGDVKTH (67 aa)). Heme is bound by residues histidine 41 and histidine 72.

Belongs to the cytochrome b5 family.

It localises to the cytoplasm. Its subcellular location is the cytoskeleton. The protein resides in the cilium axoneme. Radial spoke stalk protein that binds heme under oxidizing conditions. Required for the coordinated beating of multiple cilia maybe by functioning in a redox signaling pathway. This Xenopus laevis (African clawed frog) protein is Cytochrome b5 domain-containing protein 1 (cyb5d1).